Reading from the N-terminus, the 601-residue chain is NAD-dependent malic enzyme 59 kDa isoform, mitochondrial (601 aa).

The N-terminal 18 residues, 1 to 18 (MWRVARSAASTFRRTRRL), are a transit peptide targeting the mitochondrion. Tyrosine 129 functions as the Proton donor in the catalytic mechanism. Arginine 182 serves as a coordination point for NAD(+). The Proton acceptor role is filled by lysine 200. A divalent metal cation contacts are provided by glutamate 271, aspartate 272, and aspartate 295. NAD(+) contacts are provided by aspartate 295 and asparagine 444.

The protein belongs to the malic enzymes family. Heterodimer of two related subunits. It depends on Mg(2+) as a cofactor. Mn(2+) serves as cofactor.

It localises to the mitochondrion matrix. It catalyses the reaction (S)-malate + NAD(+) = pyruvate + CO2 + NADH. This Solanum tuberosum (Potato) protein is NAD-dependent malic enzyme 59 kDa isoform, mitochondrial.